A 238-amino-acid chain; its full sequence is 5'-deoxynucleotidase YBR242W (238 aa).

Residues 77–183 (ISDHMYRLSI…VKDIDKYEML (107 aa)) enclose the HD domain. Positions 80, 108, 109, 112, 117, 118, and 178 each coordinate a divalent metal cation.

Belongs to the HDDC2 family. In terms of assembly, homodimer. The cofactor is Mn(2+). Co(2+) serves as cofactor. It depends on Mg(2+) as a cofactor.

It catalyses the reaction a 2'-deoxyribonucleoside 5'-phosphate + H2O = a 2'-deoxyribonucleoside + phosphate. Catalyzes the dephosphorylation of the nucleoside 5'-monophosphates deoxyadenosine monophosphate (dAMP), deoxycytidine monophosphate (dCMP), deoxyguanosine monophosphate (dGMP) and deoxythymidine monophosphate (dTMP). The sequence is that of 5'-deoxynucleotidase YBR242W from Saccharomyces cerevisiae (strain ATCC 204508 / S288c) (Baker's yeast).